Consider the following 466-residue polypeptide: Acetylcholine-gated chloride channel subunit acc-1 (466 aa).

Residues Met1–Ala24 form the signal peptide. At Gln25–Tyr242 the chain is on the extracellular side. 3 N-linked (GlcNAc...) asparagine glycosylation sites follow: Asn32, Asn102, and Asn143. A disulfide bridge links Cys158 with Cys172. An N-linked (GlcNAc...) asparagine glycan is attached at Asn211. Residues Val243 to Leu263 traverse the membrane as a helical segment. The Cytoplasmic segment spans residues Gly264 to Thr272. Residues Met273–Ile290 traverse the membrane as a helical segment. The Extracellular segment spans residues Arg291–Val304. A helical transmembrane segment spans residues Trp305–Phe325. Residues Met326–Asp427 lie on the Cytoplasmic side of the membrane. The disordered stretch occupies residues Pro333–Lys352. The chain crosses the membrane as a helical span at residues Phe428–Phe448. Residues Tyr449–Pro466 are Extracellular-facing.

The protein belongs to the ligand-gated ion channel (TC 1.A.9) family. Homopentamer (in vitro). Forms heteropentamers composed of acc-1 and acc-4 or acc-1 and acc-3. Both homopentamers and heteropentamers form functional ion channels. In terms of tissue distribution, expressed in a subset of cholinergic motor neurons including cholinergic motor neurons in the ventral cord, the retrovesicular ganglion and in head neurons such as the SMD, RMD motor neurons, the AVA and AVE command interneurons and the SAA neurons. Also expressed in a small number of glutamatergic neurons including the pharyngeal neurons MI and M3, the PLM neurons and a pair of neurons in the lateral ganglion.

It is found in the cell membrane. In terms of biological role, acetylcholine-gated chloride channel subunit. Forms functional homopentameric (in vitro) and functional heteropentameric ion channels with acc-3 and acc-4 ion channel subunits. Currents in channels are triggered in response to acetylcholine, but not in response to GABA, glutamate, glycine, histamine or dopamine. This chain is Acetylcholine-gated chloride channel subunit acc-1, found in Caenorhabditis elegans.